The chain runs to 180 residues: Large ribosomal subunit protein uL5 (180 aa).

This sequence belongs to the universal ribosomal protein uL5 family. As to quaternary structure, part of the 50S ribosomal subunit; part of the 5S rRNA/L5/L18/L25 subcomplex. Contacts the 5S rRNA and the P site tRNA. Forms a bridge to the 30S subunit in the 70S ribosome.

Functionally, this is one of the proteins that bind and probably mediate the attachment of the 5S RNA into the large ribosomal subunit, where it forms part of the central protuberance. In the 70S ribosome it contacts protein S13 of the 30S subunit (bridge B1b), connecting the 2 subunits; this bridge is implicated in subunit movement. Contacts the P site tRNA; the 5S rRNA and some of its associated proteins might help stabilize positioning of ribosome-bound tRNAs. This chain is Large ribosomal subunit protein uL5, found in Anaeromyxobacter sp. (strain Fw109-5).